A 95-amino-acid chain; its full sequence is Small ribosomal subunit protein uS19 (95 aa).

Residues 73-95 (EFSPTRTYRGHGADKNAKGSKKK) are disordered.

Belongs to the universal ribosomal protein uS19 family.

Its function is as follows. Protein S19 forms a complex with S13 that binds strongly to the 16S ribosomal RNA. This chain is Small ribosomal subunit protein uS19, found in Deinococcus geothermalis (strain DSM 11300 / CIP 105573 / AG-3a).